Reading from the N-terminus, the 188-residue chain is dCTP deaminase (188 aa).

Residues 111–116 (KSTYAR), 135–137 (TLE), Gln156, Tyr170, and Gln180 contribute to the dCTP site. The Proton donor/acceptor role is filled by Glu137.

Belongs to the dCTP deaminase family. In terms of assembly, homotrimer.

The catalysed reaction is dCTP + H2O + H(+) = dUTP + NH4(+). The protein operates within pyrimidine metabolism; dUMP biosynthesis; dUMP from dCTP (dUTP route): step 1/2. Its function is as follows. Catalyzes the deamination of dCTP to dUTP. This Legionella pneumophila (strain Paris) protein is dCTP deaminase.